Here is an 88-residue protein sequence, read N- to C-terminus: Small ribosomal subunit protein uS17 (88 aa).

It belongs to the universal ribosomal protein uS17 family. As to quaternary structure, part of the 30S ribosomal subunit.

Its function is as follows. One of the primary rRNA binding proteins, it binds specifically to the 5'-end of 16S ribosomal RNA. The polypeptide is Small ribosomal subunit protein uS17 (Prochlorococcus marinus subsp. pastoris (strain CCMP1986 / NIES-2087 / MED4)).